The chain runs to 125 residues: MIQIDFQKMGGLIPAIIQDHESGEVLMVAFMDEKTLNLTLESGKTWFFSRTRNKYWMKGEESGNTQEVIEVLTDCDADSVVIKVKQNGPAACHTGNRSCFYVRWEGGQWVEHSNPLFDPKEVYKK.

Asp74 lines the Mg(2+) pocket. A Zn(2+)-binding site is contributed by Cys75. Asp76 and Asp78 together coordinate Mg(2+). The Zn(2+) site is built by Cys92 and Cys99.

It belongs to the PRA-CH family. In terms of assembly, homodimer. Requires Mg(2+) as cofactor. Zn(2+) is required as a cofactor.

The protein resides in the cytoplasm. It carries out the reaction 1-(5-phospho-beta-D-ribosyl)-5'-AMP + H2O = 1-(5-phospho-beta-D-ribosyl)-5-[(5-phospho-beta-D-ribosylamino)methylideneamino]imidazole-4-carboxamide. Its pathway is amino-acid biosynthesis; L-histidine biosynthesis; L-histidine from 5-phospho-alpha-D-ribose 1-diphosphate: step 3/9. In terms of biological role, catalyzes the hydrolysis of the adenine ring of phosphoribosyl-AMP. The protein is Phosphoribosyl-AMP cyclohydrolase of Geobacter metallireducens (strain ATCC 53774 / DSM 7210 / GS-15).